The sequence spans 328 residues: NADH-quinone oxidoreductase subunit H (328 aa).

8 helical membrane-spanning segments follow: residues 8–28 (VAAI…AVGA), 81–101 (GLFV…FMVI), 114–134 (IGLL…LFAG), 154–174 (LSYE…AGSF), 186–206 (LWFI…GIAV), 237–257 (FFVG…TLFL), 265–285 (LPPI…FILL), and 304–324 (VCLP…LIFS).

The protein belongs to the complex I subunit 1 family. As to quaternary structure, NDH-1 is composed of 14 different subunits. Subunits NuoA, H, J, K, L, M, N constitute the membrane sector of the complex.

It localises to the cell inner membrane. It catalyses the reaction a quinone + NADH + 5 H(+)(in) = a quinol + NAD(+) + 4 H(+)(out). In terms of biological role, NDH-1 shuttles electrons from NADH, via FMN and iron-sulfur (Fe-S) centers, to quinones in the respiratory chain. The immediate electron acceptor for the enzyme in this species is believed to be ubiquinone. Couples the redox reaction to proton translocation (for every two electrons transferred, four hydrogen ions are translocated across the cytoplasmic membrane), and thus conserves the redox energy in a proton gradient. This subunit may bind ubiquinone. The polypeptide is NADH-quinone oxidoreductase subunit H (Chromohalobacter salexigens (strain ATCC BAA-138 / DSM 3043 / CIP 106854 / NCIMB 13768 / 1H11)).